The chain runs to 279 residues: Borealin (279 aa).

Residues 135–152 show a composition bias toward basic residues; sequence KTKAKVAAKKPSTARKTR. The segment at 135 to 180 is disordered; it reads KTKAKVAAKKPSTARKTRASTANLTNTSKRTSKRGRATPSASKQIE. The span at 153 to 163 shows a compositional bias: polar residues; sequence ASTANLTNTSK.

Belongs to the borealin family. In terms of assembly, component of the CPC at least composed of survivin/birc5, incenp, cdca8/borealin and/or cdca9/dasra-A, and aurkb/aurora-B. Interacts with incenp (via N-terminus).

Its subcellular location is the nucleus. The protein resides in the chromosome. It localises to the centromere. The protein localises to the cytoplasm. It is found in the cytoskeleton. Its subcellular location is the spindle. In terms of biological role, component of the chromosomal passenger complex (CPC), a complex that acts as a key regulator of mitosis. The CPC complex has essential functions at the centromere in ensuring correct chromosome alignment and segregation and is required for chromatin-induced microtubule stabilization and spindle assembly. Contributes to CPC function by facilitating loading of the CPC onto chromosomes. This is Borealin (cdca8) from Xenopus tropicalis (Western clawed frog).